The sequence spans 571 residues: Cytoplasmic polyadenylation element-binding protein 2 (571 aa).

2 disordered regions span residues 1–23 and 51–75; these read MSKS…NGDR and FKQN…VSQE. A compositionally biased stretch (basic and acidic residues) spans 61 to 75; sequence SESRHENEENKVSQE. Residues 435-517 enclose the RRM domain; that stretch reads LVAFIGGVPR…KRVEIKPYFF (83 aa).

Functionally, cytoplasmic polyadenylation element binding protein that binds to and regulates the translation of specific mRNAs. This chain is Cytoplasmic polyadenylation element-binding protein 2 (cpb-2), found in Caenorhabditis remanei (Caenorhabditis vulgaris).